The primary structure comprises 131 residues: Small ribosomal subunit protein uS11 (131 aa).

It belongs to the universal ribosomal protein uS11 family. In terms of assembly, part of the 30S ribosomal subunit. Interacts with proteins S7 and S18. Binds to IF-3.

Functionally, located on the platform of the 30S subunit, it bridges several disparate RNA helices of the 16S rRNA. Forms part of the Shine-Dalgarno cleft in the 70S ribosome. The sequence is that of Small ribosomal subunit protein uS11 from Neisseria gonorrhoeae (strain ATCC 700825 / FA 1090).